The following is a 214-amino-acid chain: Pyrrolidone-carboxylate peptidase (214 aa).

Active-site residues include Glu80, Cys143, and His166.

It belongs to the peptidase C15 family. In terms of assembly, homotetramer.

Its subcellular location is the cytoplasm. The enzyme catalyses Release of an N-terminal pyroglutamyl group from a polypeptide, the second amino acid generally not being Pro.. Its function is as follows. Removes 5-oxoproline from various penultimate amino acid residues except L-proline. This chain is Pyrrolidone-carboxylate peptidase, found in Enterobacter sp. (strain 638).